A 305-amino-acid polypeptide reads, in one-letter code: Glycine--tRNA ligase alpha subunit (305 aa).

It belongs to the class-II aminoacyl-tRNA synthetase family. As to quaternary structure, tetramer of two alpha and two beta subunits.

The protein localises to the cytoplasm. The enzyme catalyses tRNA(Gly) + glycine + ATP = glycyl-tRNA(Gly) + AMP + diphosphate. The sequence is that of Glycine--tRNA ligase alpha subunit from Streptococcus pyogenes serotype M4 (strain MGAS10750).